The primary structure comprises 305 residues: Membrane glycoprotein UL142 (305 aa).

The first 19 residues, 1–19, serve as a signal peptide directing secretion; it reads MRIEWACWLFGYFVSSVGS. At 20-270 the chain is on the lumenal side; the sequence is ERSLSYRYHL…QKTNNTTSPW (251 aa). The helical transmembrane segment at 271–288 threads the bilayer; sequence VYAIPMGATATIGAGLYI. Topologically, residues 289-305 are cytoplasmic; sequence GKHFTPVKFVYEVWRGQ.

Interacts with host MICA and ULBP3.

It is found in the host endoplasmic reticulum membrane. It localises to the host Golgi apparatus membrane. Functionally, participates in the inhibition of the host immune response. Prevents host NK cell-mediated lysis of the infected cell by preventing the KLRK1 ligand 3/ULBP3 trafficking to the cell surface. Also retains another KLRK1 ligand, MHC class I-related chain A/MICA, in the Golgi apparatus to avoid its surface expression. This chain is Membrane glycoprotein UL142 (UL142), found in Homo sapiens (Human).